The sequence spans 2147 residues: Probable serine/threonine-protein kinase roco6 (2147 aa).

Topologically, residues 1 to 1055 (MNSIHKQHYT…LDHSRVEFNR (1055 aa)) are extracellular. LRR repeat units lie at residues 69-89 (DMKY…MMIP), 101-122 (SISI…LKQL), 124-145 (QLIS…FPEE), 148-169 (LLRK…FNKF), 171-192 (ILED…LFPE), 193-214 (GIMR…PWFE), 215-236 (SLLT…PFHL), 237-256 (VRVS…VILR), 306-328 (HLTH…ANLT), 329-350 (ELVR…IVSY), and 352-372 (RLEH…PRRI). The region spanning 390–750 (QGEPSYRVKL…DLLKKTVVEL (361 aa)) is the Roc domain. The tract at residues 390–750 (QGEPSYRVKL…DLLKKTVVEL (361 aa)) is small GTPase-like. Position 403–410 (403–410 (GQENVGKT)) interacts with GTP. 2 disordered regions span residues 491-582 (NSNG…VGTN) and 602-621 (SNLS…GGSG). Low complexity-rich tracts occupy residues 492–512 (SNGV…NIHS), 519–531 (NVNS…SNNS), 539–568 (NSFL…NVNS), and 602–617 (SNLS…NNNS). Residues 634-638 (DCAGQ) and 691-694 (THLD) contribute to the GTP site. Positions 758-892 (PELYLKLEKL…RFELMFPLDS (135 aa)) constitute a COR domain. Composition is skewed to low complexity over residues 905-941 (GNSY…SPST) and 960-977 (SGNN…RSIS). The disordered stretch occupies residues 905-995 (GNSYVNNNNN…NSDLDLIGGG (91 aa)). A WD 1 repeat occupies 1051 to 1098 (VEFNRWIQLSFAPAGLFSRLLIRLLISKEFDMKPILYWRNGVVVESQS). The helical transmembrane segment at 1056-1076 (WIQLSFAPAGLFSRLLIRLLI) threads the bilayer. At 1077–2147 (SKEFDMKPIL…CGTNNVCIWS (1071 aa)) the chain is on the cytoplasmic side. 3 LRR repeats span residues 1237-1263 (ILSI…PPPP), 1274-1297 (DDNI…GSQP), and 1325-1348 (ESSL…TYKY). In terms of domain architecture, Protein kinase spans 1356-1627 (FESPKLIGRG…KIVKRIKQII (272 aa)). Residues 1362 to 1370 (IGRGASGKI) and Lys-1383 each bind ATP. The Proton acceptor role is filled by Asp-1481. A disordered region spans residues 1653–1699 (ADSQPFHYHQQQQPSLNSTNQLQQQQYSSVLTSPRSNLSDSSNSSQN). Low complexity predominate over residues 1662–1699 (QQQQPSLNSTNQLQQQQYSSVLTSPRSNLSDSSNSSQN). WD repeat units lie at residues 1735–1774 (QPEA…QIFR) and 1778–1820 (LHPG…LDDQ). One can recognise a PH domain in the interval 1821 to 1923 (SGTKSDFITK…WLTAINRVIN (103 aa)). The stretch at 2031–2068 (HYSKPITSMALVEKNVWISCEDESLSVWDGDTGSFIRK) is one WD 4 repeat.

The protein belongs to the protein kinase superfamily. TKL Ser/Thr protein kinase family. ROCO subfamily.

The protein localises to the membrane. The enzyme catalyses L-seryl-[protein] + ATP = O-phospho-L-seryl-[protein] + ADP + H(+). The catalysed reaction is L-threonyl-[protein] + ATP = O-phospho-L-threonyl-[protein] + ADP + H(+). Functionally, may act as a serine/threonine-protein kinase and guanine-nucleotide releasing factor. This chain is Probable serine/threonine-protein kinase roco6 (roco6), found in Dictyostelium discoideum (Social amoeba).